The chain runs to 89 residues: Small ribosomal subunit protein uS15 (89 aa).

It belongs to the universal ribosomal protein uS15 family. In terms of assembly, part of the 30S ribosomal subunit. Forms a bridge to the 50S subunit in the 70S ribosome, contacting the 23S rRNA.

Functionally, one of the primary rRNA binding proteins, it binds directly to 16S rRNA where it helps nucleate assembly of the platform of the 30S subunit by binding and bridging several RNA helices of the 16S rRNA. In terms of biological role, forms an intersubunit bridge (bridge B4) with the 23S rRNA of the 50S subunit in the ribosome. The protein is Small ribosomal subunit protein uS15 of Limosilactobacillus reuteri (strain DSM 20016) (Lactobacillus reuteri).